Reading from the N-terminus, the 778-residue chain is Endonuclease MutS2 (778 aa).

An ATP-binding site is contributed by 328–335 (GPNTGGKT). The Smr domain occupies 702–777 (LDLRGKRYEE…GSGATIVTFK (76 aa)).

The protein belongs to the DNA mismatch repair MutS family. MutS2 subfamily. In terms of assembly, homodimer. Binds to stalled ribosomes, contacting rRNA.

Its function is as follows. Endonuclease that is involved in the suppression of homologous recombination and thus may have a key role in the control of bacterial genetic diversity. Functionally, acts as a ribosome collision sensor, splitting the ribosome into its 2 subunits. Detects stalled/collided 70S ribosomes which it binds and splits by an ATP-hydrolysis driven conformational change. Acts upstream of the ribosome quality control system (RQC), a ribosome-associated complex that mediates the extraction of incompletely synthesized nascent chains from stalled ribosomes and their subsequent degradation. Probably generates substrates for RQC. The protein is Endonuclease MutS2 of Streptococcus pneumoniae (strain Taiwan19F-14).